A 159-amino-acid polypeptide reads, in one-letter code: Eukaryotic translation initiation factor 5A-2 (159 aa).

Positions 1–10 (MSDEEHHFEP) are enriched in basic and acidic residues. The segment at 1–21 (MSDEEHHFEPAADAGASKTYP) is disordered. Hypusine is present on K52.

It belongs to the eIF-5A family. In terms of processing, lys-52 undergoes hypusination, a unique post-translational modification that consists in the addition of a butylamino group from spermidine to lysine side chain, leading to the formation of the unusual amino acid hypusine. eIF-5As are the only known proteins to undergo this modification, which is essential for their function.

Functionally, translation factor that promotes translation elongation and termination, particularly upon ribosome stalling at specific amino acid sequence contexts. Binds between the exit (E) and peptidyl (P) site of the ribosome and promotes rescue of stalled ribosome: specifically required for efficient translation of polyproline-containing peptides as well as other motifs that stall the ribosome. Acts as a ribosome quality control (RQC) cofactor by joining the RQC complex to facilitate peptidyl transfer during CAT tailing step. This chain is Eukaryotic translation initiation factor 5A-2, found in Medicago sativa (Alfalfa).